A 367-amino-acid polypeptide reads, in one-letter code: tRNA(Ile)-lysidine synthase (367 aa).

32-37 lines the ATP pocket; it reads SGGSDS.

The protein belongs to the tRNA(Ile)-lysidine synthase family.

Its subcellular location is the cytoplasm. The catalysed reaction is cytidine(34) in tRNA(Ile2) + L-lysine + ATP = lysidine(34) in tRNA(Ile2) + AMP + diphosphate + H(+). Its function is as follows. Ligates lysine onto the cytidine present at position 34 of the AUA codon-specific tRNA(Ile) that contains the anticodon CAU, in an ATP-dependent manner. Cytidine is converted to lysidine, thus changing the amino acid specificity of the tRNA from methionine to isoleucine. This Hyphomonas neptunium (strain ATCC 15444) protein is tRNA(Ile)-lysidine synthase.